We begin with the raw amino-acid sequence, 778 residues long: Tubulin polyglutamylase ttll6 (778 aa).

Residues 1 to 43 (MGTPAERSVSEVCRCEPDPGLEGEGWGSDTHAEPSNTPIPLPV) are disordered. The TTL domain maps to 51–393 (KKKLWINLTN…LGACDRRKIT (343 aa)). ATP is bound by residues Lys-168, 174–175 (QG), 196–199 (QVYM), and 209–211 (KFD). Position 174 (Gln-174) interacts with a protein. Position 235 (Arg-235) interacts with L-glutamate. 257-258 (TN) lines the ATP pocket. The L-glutamate site is built by Tyr-259 and Lys-277. Asp-340, Glu-353, and Asn-355 together coordinate Mg(2+). An a protein-binding site is contributed by His-356. Residues 365 to 445 (RLDREVKDSL…MGGFRRIFPR (81 aa)) are c-MTBD region. Lys-371 contributes to the L-glutamate binding site. Basic and acidic residues-rich tracts occupy residues 402–418 (ERLQQNRSREARNEEPR), 485–510 (KQEQKERDKKGSRKQDLQGESAGEKV), 533–542 (SVREETPVSL), and 760–778 (LSHDLRKAPRRVLPHEHSL). 3 disordered regions span residues 402–422 (ERLQQNRSREARNEEPRQSQA), 485–542 (KQEQ…PVSL), and 758–778 (PHLSHDLRKAPRRVLPHEHSL).

It belongs to the tubulin--tyrosine ligase family. The cofactor is Mg(2+).

It localises to the cytoplasm. It is found in the cytoskeleton. Its subcellular location is the cilium axoneme. The protein resides in the cilium basal body. The enzyme catalyses L-glutamyl-[protein] + L-glutamate + ATP = gamma-L-glutamyl-L-glutamyl-[protein] + ADP + phosphate + H(+). It carries out the reaction (L-glutamyl)(n)-gamma-L-glutamyl-L-glutamyl-[protein] + L-glutamate + ATP = (L-glutamyl)(n+1)-gamma-L-glutamyl-L-glutamyl-[protein] + ADP + phosphate + H(+). Functionally, polyglutamylase which modifies both tubulin and non-tubulin proteins, generating alpha-linked polyglutamate side chains on the gamma-carboxyl group of specific glutamate residues of target proteins. Preferentially mediates ATP-dependent long polyglutamate chain elongation over the initiation step of the polyglutamylation reaction. Preferentially modifies the alpha-tubulin tail over a beta-tail. Mediates microtubule polyglutamylation in cilia axoneme, which is important for ciliary structural formation and motility. Polyglutamylates olfactory cilia, necessary for the regulation of ciliary structure and beating. The chain is Tubulin polyglutamylase ttll6 from Danio rerio (Zebrafish).